Reading from the N-terminus, the 272-residue chain is Indole-3-glycerol phosphate synthase (272 aa).

It belongs to the TrpC family.

The enzyme catalyses 1-(2-carboxyphenylamino)-1-deoxy-D-ribulose 5-phosphate + H(+) = (1S,2R)-1-C-(indol-3-yl)glycerol 3-phosphate + CO2 + H2O. Its pathway is amino-acid biosynthesis; L-tryptophan biosynthesis; L-tryptophan from chorismate: step 4/5. In Paenarthrobacter aurescens (strain TC1), this protein is Indole-3-glycerol phosphate synthase.